The following is a 244-amino-acid chain: Reticulon-like protein B7 (244 aa).

A Reticulon domain is found at 70-244; it reads PADVLLWRDK…EAKFLSKIPH (175 aa). Helical transmembrane passes span 80–100, 103–123, and 172–192; these read KVTL…GFGG, LLTS…LWSN, and FVMA…FSFL.

It is found in the endoplasmic reticulum membrane. The sequence is that of Reticulon-like protein B7 (RTNLB7) from Arabidopsis thaliana (Mouse-ear cress).